A 396-amino-acid chain; its full sequence is Metacaspase-1 (396 aa).

Residues 1–20 (MSGYPGQGYQGQGYGQGYGQ) show a composition bias toward gly residues. The interval 1–86 (MSGYPGQGYQ…PQGMQQFGHG (86 aa)) is disordered. Low complexity predominate over residues 47–62 (HYQYGPPQGGYQYPPQ). Residues 72-81 (QAHQPPQGMQ) are compositionally biased toward polar residues. Residues His-186 and Cys-242 contribute to the active site.

This sequence belongs to the peptidase C14B family.

In terms of biological role, involved in cell death (apoptosis). The polypeptide is Metacaspase-1 (MCA1) (Pyricularia oryzae (strain 70-15 / ATCC MYA-4617 / FGSC 8958) (Rice blast fungus)).